A 292-amino-acid polypeptide reads, in one-letter code: Tumor necrosis factor alpha-induced protein 8-like protein 3 (292 aa).

Positions 81 to 107 (DAQPAARSMDSDSGEQSEGEPVTAAGP) are disordered. Residues 109-292 (VFSSKSLALQ…INKLLDEKVL (184 aa)) form a binding to phosphoinositides region.

This sequence belongs to the TNFAIP8 family. In terms of tissue distribution, widely expressed (at protein level). Highly expressed in most carcinoma cell lines.

It localises to the cytoplasm. Its subcellular location is the cell membrane. Its function is as follows. Acts as a lipid transfer protein. Preferentially captures and shuttles two lipid second messengers, i.e., phosphatidylinositol 4,5- bisphosphate and phosphatidylinositol 3,4,5-trisphosphate and increases their levels in the plasma membrane. Additionally, may also function as a lipid-presenting protein to enhance the activity of the PI3K-AKT and MEK-ERK pathways. May act as a regulator of tumorigenesis through its activation of phospholipid signaling. The sequence is that of Tumor necrosis factor alpha-induced protein 8-like protein 3 (TNFAIP8L3) from Homo sapiens (Human).